We begin with the raw amino-acid sequence, 183 residues long: Endoribonuclease YbeY (183 aa).

Residues histidine 140, histidine 144, and histidine 150 each contribute to the Zn(2+) site.

It belongs to the endoribonuclease YbeY family. It depends on Zn(2+) as a cofactor.

It is found in the cytoplasm. Its function is as follows. Single strand-specific metallo-endoribonuclease involved in late-stage 70S ribosome quality control and in maturation of the 3' terminus of the 16S rRNA. The sequence is that of Endoribonuclease YbeY from Bradyrhizobium diazoefficiens (strain JCM 10833 / BCRC 13528 / IAM 13628 / NBRC 14792 / USDA 110).